A 373-amino-acid chain; its full sequence is Putative F-box/kelch-repeat protein At2g41360 (373 aa).

Residues Trp8–Arg54 form the F-box domain. 2 Kelch repeats span residues Glu116–Gly162 and Lys163–Ser208.

This is Putative F-box/kelch-repeat protein At2g41360 from Arabidopsis thaliana (Mouse-ear cress).